Consider the following 245-residue polypeptide: tRNA pseudouridine synthase A (245 aa).

D52 serves as the catalytic Nucleophile. Residue Y110 coordinates substrate.

The protein belongs to the tRNA pseudouridine synthase TruA family. As to quaternary structure, homodimer.

It catalyses the reaction uridine(38/39/40) in tRNA = pseudouridine(38/39/40) in tRNA. In terms of biological role, formation of pseudouridine at positions 38, 39 and 40 in the anticodon stem and loop of transfer RNAs. This Pseudothermotoga lettingae (strain ATCC BAA-301 / DSM 14385 / NBRC 107922 / TMO) (Thermotoga lettingae) protein is tRNA pseudouridine synthase A.